An 876-amino-acid chain; its full sequence is AP-5 complex subunit beta-1 (876 aa).

Probably part of the adaptor protein complex 5 (AP-5), a tetramer composed of AP5B1, AP5M1, AP5S1 and AP5Z1. Interacts with ZFYVE26 and SPG11.

In terms of biological role, as part of AP-5, a probable fifth adaptor protein complex it may be involved in endosomal transport. The sequence is that of AP-5 complex subunit beta-1 (Ap5b1) from Mus musculus (Mouse).